The primary structure comprises 311 residues: Probable deoxyhypusine synthase (311 aa).

The Nucleophile role is filled by lysine 284.

This sequence belongs to the deoxyhypusine synthase family. Requires NAD(+) as cofactor.

It catalyses the reaction [eIF5A protein]-L-lysine + spermidine = [eIF5A protein]-deoxyhypusine + propane-1,3-diamine. The protein operates within protein modification; eIF5A hypusination. Catalyzes the NAD-dependent oxidative cleavage of spermidine and the subsequent transfer of the butylamine moiety of spermidine to the epsilon-amino group of a specific lysine residue of the eIF-5A precursor protein to form the intermediate deoxyhypusine residue. The protein is Probable deoxyhypusine synthase of Sulfolobus acidocaldarius (strain ATCC 33909 / DSM 639 / JCM 8929 / NBRC 15157 / NCIMB 11770).